Here is a 291-residue protein sequence, read N- to C-terminus: Potassium-transporting ATPase subunit beta (291 aa).

Topologically, residues 1–36 are cytoplasmic; sequence MAALQEKKSCSQRMEEFRHYCWNPDTGQMLGRTLSR. Residues 37 to 57 form a helical; Signal-anchor for type II membrane protein membrane-spanning segment; sequence WVWISLYYVAFYVVMTGLFAL. Topologically, residues 58–291 are extracellular; it reads CIYVLMQTID…KVEFKLKIQK (234 aa). N-linked (GlcNAc...) asparagine glycans are attached at residues Asn-99, Asn-103, Asn-130, Asn-146, and Asn-161. A disulfide bridge links Cys-131 with Cys-152. Cysteines 162 and 178 form a disulfide. N-linked (GlcNAc...) asparagine glycosylation is found at Asn-193 and Asn-222. Positions 194–291 are immunoglobulin-like; it reads STPPRVDCTF…KVEFKLKIQK (98 aa). The cysteines at positions 201 and 263 are disulfide-linked.

The protein belongs to the X(+)/potassium ATPases subunit beta family. As to quaternary structure, the ATPase pump is composed of two subunits: alpha (catalytic) and beta (regulatory). Interacts with alpha subunit ATP12A; this interaction is required for the formation of a functionally active pump and targeting at the plasma membrane. Interacts (via N-terminus) with alpha subunit ATP4A (via the P-domain). Post-translationally, N-glycosylation is necessary for assembly and functional expression of the pump at the plasma membrane.

The protein localises to the apical cell membrane. Its subcellular location is the cell membrane. Its function is as follows. The beta subunit of the gastric H(+)/K(+) ATPase pump which transports H(+) ions in exchange for K(+) ions across the apical membrane of parietal cells. Plays a structural and regulatory role in the assembly and membrane targeting of a functionally active pump. Within a transport cycle, the transfer of a H(+) ion across the membrane is coupled to ATP hydrolysis and is associated with a transient phosphorylation of the alpha subunit that shifts the pump conformation from inward-facing (E1) to outward-facing state (E2). Interacts with the phosphorylation domain of the alpha subunit and functions as a ratchet, stabilizing the lumenal-open E2 conformation and preventing the reverse reaction of the transport cycle. This chain is Potassium-transporting ATPase subunit beta (ATP4B), found in Oryctolagus cuniculus (Rabbit).